A 309-amino-acid polypeptide reads, in one-letter code: tRNA pseudouridine synthase B (309 aa).

Asp39 (nucleophile) is an active-site residue. One can recognise a PUA domain in the interval 229–306; that stretch reads LPRVVVHQES…ERVLTLRKVF (78 aa).

Belongs to the pseudouridine synthase TruB family. Type 1 subfamily.

It carries out the reaction uridine(55) in tRNA = pseudouridine(55) in tRNA. Responsible for synthesis of pseudouridine from uracil-55 in the psi GC loop of transfer RNAs. This Thermotoga petrophila (strain ATCC BAA-488 / DSM 13995 / JCM 10881 / RKU-1) protein is tRNA pseudouridine synthase B.